Here is a 65-residue protein sequence, read N- to C-terminus: Large ribosomal subunit protein bL35 (65 aa).

Basic residues-rich tracts occupy residues 1 to 11 and 21 to 43; these read MPKIKTRRSAA and KFKRRRQNLRHILTKKAASRKMR. Residues 1–65 are disordered; that stretch reads MPKIKTRRSA…KAVRRMLPNG (65 aa).

This sequence belongs to the bacterial ribosomal protein bL35 family.

The chain is Large ribosomal subunit protein bL35 from Desulfovibrio desulfuricans (strain ATCC 27774 / DSM 6949 / MB).